We begin with the raw amino-acid sequence, 115 residues long: Peptidyl-tRNA hydrolase (115 aa).

Belongs to the PTH2 family.

It localises to the cytoplasm. It carries out the reaction an N-acyl-L-alpha-aminoacyl-tRNA + H2O = an N-acyl-L-amino acid + a tRNA + H(+). Its function is as follows. The natural substrate for this enzyme may be peptidyl-tRNAs which drop off the ribosome during protein synthesis. The protein is Peptidyl-tRNA hydrolase of Methanococcoides burtonii (strain DSM 6242 / NBRC 107633 / OCM 468 / ACE-M).